Consider the following 669-residue polypeptide: Diacylglycerol lipase-beta (669 aa).

The Cytoplasmic segment spans residues 1–17; sequence MPGMVLFGRRWSLASDD. Residues 18–38 traverse the membrane as a helical segment; it reads LVFPGSFELFLRVLWWIVSLT. The Extracellular portion of the chain corresponds to 39–58; sequence LYLTHRRRLDCPGGVLLSTY. The helical transmembrane segment at 59 to 79 threads the bilayer; sequence LIVLLVLLAVIICTVLAIVCV. Over 80–102 the chain is Cytoplasmic; the sequence is SMRGTICNPGPRKSMSKLLYIRL. The helical transmembrane segment at 103 to 123 threads the bilayer; sequence ALFLPEMVWASLGAAWVAKGI. Topologically, residues 124–128 are extracellular; that stretch reads QCDRT. The helical transmembrane segment at 129 to 149 threads the bilayer; sequence VVIGIIATVIVSWIVIAATMV. The Cytoplasmic portion of the chain corresponds to 150–669; the sequence is TIIFVFDPLG…CPGQGGSSVP (520 aa). Residues Ser443 and Asp495 each act as charge relay system in the active site. 3 positions are modified to phosphoserine: Ser570, Ser578, and Ser582.

Belongs to the AB hydrolase superfamily. Lipase family. Requires Ca(2+) as cofactor. In terms of tissue distribution, expressed in liver and immune cells such as macrophages and microglias. In embryonic brains present in axonal tracts, while in adults localizes to dendritic fields, correlating with the developmental change in requirement for 2-AG synthesis from the pre- to the postsynaptic compartment (at protein level).

The protein localises to the cell membrane. It catalyses the reaction a 1,2-diacyl-sn-glycerol + H2O = a 2-acylglycerol + a fatty acid + H(+). It carries out the reaction 1-octadecanoyl-2-(5Z,8Z,11Z,14Z-eicosatetraenoyl)-sn-glycerol + H2O = 2-(5Z,8Z,11Z,14Z-eicosatetraenoyl)-glycerol + octadecanoate + H(+). The enzyme catalyses 1,2-di-(9Z-octadecenoyl)-sn-glycerol + H2O = 2-(9Z-octadecenoyl)-glycerol + (9Z)-octadecenoate + H(+). The catalysed reaction is 1-(9Z-octadecenoyl)-2-(5Z,8Z,11Z,14Z-eicosatetraenoyl)-sn-glycerol + H2O = 2-(5Z,8Z,11Z,14Z-eicosatetraenoyl)-glycerol + (9Z)-octadecenoate + H(+). It catalyses the reaction 1-(9Z-octadecenoyl)-2-octadecanoyl-sn-glycerol + H2O = 2-octadecanoylglycerol + (9Z)-octadecenoate + H(+). It carries out the reaction 1-(9Z-octadecenoyl)-2-(9Z,12Z-octadecadienoyl)-sn-glycerol + H2O = 2-(9Z,12Z-octadecadienoyl)-glycerol + (9Z)-octadecenoate + H(+). The enzyme catalyses 1-(9Z-octadecenoyl)-2-O-(5Z,8Z,11Z,14Z-eicosatetraenyl)-sn-glycerol + H2O = 2-O-(5Z,8Z,11Z,14Z)-eicosatetraenylglycerol + (9Z)-octadecenoate + H(+). The catalysed reaction is a triacylglycerol + H2O = a diacylglycerol + a fatty acid + H(+). It catalyses the reaction 1,2,3-tri-(5Z,8Z,11Z,14Z-eicosatetraenoyl)-glycerol + H2O = 1,2-di-(5Z,8Z,11Z,14Z-eicosatetraenoyl)-glycerol + (5Z,8Z,11Z,14Z)-eicosatetraenoate + H(+). It carries out the reaction 1,2,3-(4Z,7Z,10Z,13Z,16Z,19Z-docosahexaenoyl)-glycerol + H2O = 1,2-di-(4Z,7Z,10Z,13Z,16Z,19Z-docosahexaenoyl)-glycerol + (4Z,7Z,10Z,13Z,16Z,19Z)-docosahexaenoate + H(+). Inhibited by the 1,2,3-triazole urea covalent inhibitors KT109 and KT172. Inhibited by p-hydroxy-mercuri-benzoate and HgCl(2), but not by PMSF. Also inhibited by RHC80267, a drug that blocks 2-AG formation. Lipase that catalyzes the hydrolysis of arachidonic acid (AA)-esterified diacylglycerols (DAGs) to produce the principal endocannabinoid, 2-arachidonoylglycerol (2-AG) which can be further cleaved by downstream enzymes to release arachidonic acid (AA) for cyclooxygenase (COX)-mediated eicosanoid production. Preferentially hydrolyzes DAGs at the sn-1 position in a calcium-dependent manner and has negligible activity against other lipids including monoacylglycerols and phospholipids. Plays a key role in the regulation of 2-AG and AA pools utilized by COX1/2 to generate lipid mediators of macrophage and microglia inflammatory responses. Also functions as a polyunsaturated fatty acids-specific triacylglycerol lipase in macrophages. Plays an important role to support the metabolic and signaling demands of macrophages. The polypeptide is Diacylglycerol lipase-beta (Daglb) (Mus musculus (Mouse)).